Consider the following 374-residue polypeptide: Gustatory receptor 23a (374 aa).

Topologically, residues Met-1–Arg-6 are cytoplasmic. Residues Val-7–Leu-27 traverse the membrane as a helical segment. Residues Arg-28 to Val-36 are Extracellular-facing. Residues Leu-37–Ile-57 traverse the membrane as a helical segment. At Tyr-58 to His-72 the chain is on the cytoplasmic side. A helical transmembrane segment spans residues Ile-73 to Gly-93. Topologically, residues Phe-94 to Pro-112 are extracellular. Residues Trp-113 to Cys-133 traverse the membrane as a helical segment. At Ser-134–Arg-226 the chain is on the cytoplasmic side. A helical membrane pass occupies residues Ile-227–Val-247. Residues Ser-248–Arg-263 are Extracellular-facing. Residues Ile-264–Ala-284 form a helical membrane-spanning segment. Over Cys-285–His-343 the chain is Cytoplasmic. Residues Leu-344–Phe-364 traverse the membrane as a helical segment. Topologically, residues Ala-365–Gly-374 are extracellular.

This sequence belongs to the insect chemoreceptor superfamily. Gustatory receptor (GR) family. Gr2a subfamily. As to expression, expressed in the adult labellar chemosensory neurons and labral sense organ. Expressed in neurons of the dorsal pharyngeal sense organ of larvae.

It is found in the cell membrane. Probable gustatory receptor which mediates acceptance or avoidance behavior, depending on its substrates. In Drosophila melanogaster (Fruit fly), this protein is Gustatory receptor 23a (Gr23a).